Consider the following 67-residue polypeptide: Large ribosomal subunit protein bL35 (67 aa).

Belongs to the bacterial ribosomal protein bL35 family.

This Caldanaerobacter subterraneus subsp. tengcongensis (strain DSM 15242 / JCM 11007 / NBRC 100824 / MB4) (Thermoanaerobacter tengcongensis) protein is Large ribosomal subunit protein bL35.